Consider the following 113-residue polypeptide: uncharacterized protein (113 aa).

2 helical membrane passes run 25–45 (FGFC…CFII) and 49–69 (FEVE…LSVW).

The protein localises to the host membrane. This is an uncharacterized protein from Spiroplasma citri (SpV1).